Consider the following 839-residue polypeptide: Protein translocase subunit SecA (839 aa).

ATP is bound by residues glutamine 85, 103 to 107 (GEGKT), and aspartate 493. Basic and acidic residues predominate over residues 780–790 (QIHEQERERAS). Positions 780–839 (QIHEQERERASQRATTAAPQNIQSQQSANTDDLPKVERNEACPCGSGKKFKNCHGRKSFS) are disordered. A compositionally biased stretch (polar residues) spans 791 to 809 (QRATTAAPQNIQSQQSANT). Positions 821, 823, 832, and 833 each coordinate Zn(2+). Residues 827-839 (KKFKNCHGRKSFS) are compositionally biased toward basic residues.

The protein belongs to the SecA family. Monomer and homodimer. Part of the essential Sec protein translocation apparatus which comprises SecA, SecYEG and auxiliary proteins SecDF. Other proteins may also be involved. Requires Zn(2+) as cofactor.

The protein localises to the cell membrane. The protein resides in the cytoplasm. The catalysed reaction is ATP + H2O + cellular proteinSide 1 = ADP + phosphate + cellular proteinSide 2.. Functionally, part of the Sec protein translocase complex. Interacts with the SecYEG preprotein conducting channel. Has a central role in coupling the hydrolysis of ATP to the transfer of proteins into and across the cell membrane, serving as an ATP-driven molecular motor driving the stepwise translocation of polypeptide chains across the membrane. The chain is Protein translocase subunit SecA from Streptococcus pyogenes serotype M1.